A 389-amino-acid polypeptide reads, in one-letter code: Phosphoglycerate kinase (389 aa).

Substrate contacts are provided by residues 21 to 23 (DLN), R36, 59 to 62 (HLGR), R112, and R145. Residues K196, E313, and 342–345 (GGDT) each bind ATP.

This sequence belongs to the phosphoglycerate kinase family. As to quaternary structure, monomer.

The protein resides in the cytoplasm. The enzyme catalyses (2R)-3-phosphoglycerate + ATP = (2R)-3-phospho-glyceroyl phosphate + ADP. Its pathway is carbohydrate degradation; glycolysis; pyruvate from D-glyceraldehyde 3-phosphate: step 2/5. In Mannheimia succiniciproducens (strain KCTC 0769BP / MBEL55E), this protein is Phosphoglycerate kinase.